The chain runs to 224 residues: Orotate phosphoribosyltransferase (224 aa).

5-phospho-alpha-D-ribose 1-diphosphate is bound at residue K29. Orotate is bound at residue 37–38 (FF). Residues 75-76 (YK), R105, K106, K109, H111, and 130-138 (DDVITAGTS) contribute to the 5-phospho-alpha-D-ribose 1-diphosphate site. Residues T134 and R162 each coordinate orotate.

This sequence belongs to the purine/pyrimidine phosphoribosyltransferase family. PyrE subfamily. In terms of assembly, homodimer. Mg(2+) is required as a cofactor.

It catalyses the reaction orotidine 5'-phosphate + diphosphate = orotate + 5-phospho-alpha-D-ribose 1-diphosphate. It functions in the pathway pyrimidine metabolism; UMP biosynthesis via de novo pathway; UMP from orotate: step 1/2. Catalyzes the transfer of a ribosyl phosphate group from 5-phosphoribose 1-diphosphate to orotate, leading to the formation of orotidine monophosphate (OMP). In Bordetella bronchiseptica (strain ATCC BAA-588 / NCTC 13252 / RB50) (Alcaligenes bronchisepticus), this protein is Orotate phosphoribosyltransferase.